A 99-amino-acid chain; its full sequence is MNYWHSAIATFGIGDTVTTIIGLSMAGIYEANPAANTILGELGLFGIIAAKVLYFGLMYIIVKSMPEHSRKYGPITITVLGTLICLWNIAIIATQVLGF.

The next 3 membrane-spanning stretches (helical) occupy residues 8–28, 42–62, and 73–93; these read IATF…MAGI, LGLF…YIIV, and GPIT…AIIA.

It localises to the host membrane. This chain is Putative transmembrane protein ORF13, found in His1 virus (isolate Australia/Victoria) (His1V).